A 573-amino-acid chain; its full sequence is Sterol esterase 1 (573 aa).

The Cytoplasmic segment spans residues 1–12; it reads MGVSAVLKRARN. An intramembrane segment occupies 13-33; the sequence is LLATFIVCCFMAVVLVLALAH. Over 34–573 the chain is Cytoplasmic; that stretch reads HFINEHRDTR…TELEMVAEKA (540 aa). The active-site Nucleophile is serine 315. Residues aspartate 489 and histidine 520 each act as charge relay system in the active site.

Belongs to the AB hydrolase superfamily. Post-translationally, not N-glycosylated.

It localises to the lipid droplet. Its subcellular location is the membrane. The enzyme catalyses a sterol ester + H2O = a sterol + a fatty acid + H(+). Functionally, mediates the hydrolysis of steryl esters, thereby playing a central role in lipid metabolism. Under heme-deficient conditions, it constitutes the major steryl ester hydrolase, suggesting that it plays a central role in mobilization of steryl esters under anaerobic conditions. In Saccharomyces cerevisiae (strain ATCC 204508 / S288c) (Baker's yeast), this protein is Sterol esterase 1 (YEH1).